The sequence spans 156 residues: ATP synthase subunit b (156 aa).

The helical transmembrane segment at 7-29 (LIAQAISFAILIWFTTKFVWPYL) threads the bilayer.

The protein belongs to the ATPase B chain family. As to quaternary structure, F-type ATPases have 2 components, F(1) - the catalytic core - and F(0) - the membrane proton channel. F(1) has five subunits: alpha(3), beta(3), gamma(1), delta(1), epsilon(1). F(0) has three main subunits: a(1), b(2) and c(10-14). The alpha and beta chains form an alternating ring which encloses part of the gamma chain. F(1) is attached to F(0) by a central stalk formed by the gamma and epsilon chains, while a peripheral stalk is formed by the delta and b chains.

It localises to the cell inner membrane. Its function is as follows. F(1)F(0) ATP synthase produces ATP from ADP in the presence of a proton or sodium gradient. F-type ATPases consist of two structural domains, F(1) containing the extramembraneous catalytic core and F(0) containing the membrane proton channel, linked together by a central stalk and a peripheral stalk. During catalysis, ATP synthesis in the catalytic domain of F(1) is coupled via a rotary mechanism of the central stalk subunits to proton translocation. Functionally, component of the F(0) channel, it forms part of the peripheral stalk, linking F(1) to F(0). The chain is ATP synthase subunit b from Methylobacillus flagellatus (strain ATCC 51484 / DSM 6875 / VKM B-1610 / KT).